The chain runs to 320 residues: Ferrochelatase (320 aa).

Fe cation contacts are provided by H194 and E275.

Belongs to the ferrochelatase family. In terms of assembly, monomer.

The protein localises to the cytoplasm. The catalysed reaction is heme b + 2 H(+) = protoporphyrin IX + Fe(2+). It functions in the pathway porphyrin-containing compound metabolism; protoheme biosynthesis; protoheme from protoporphyrin-IX: step 1/1. Functionally, catalyzes the ferrous insertion into protoporphyrin IX. This Salmonella schwarzengrund (strain CVM19633) protein is Ferrochelatase.